The following is a 1146-amino-acid chain: Error-prone DNA polymerase (1146 aa).

Disordered regions lie at residues 1–43 and 154–178; these read MGWG…WSRK and ATPE…PPGP. The segment covering 12–26 has biased composition (basic and acidic residues); the sequence is ELERVLSGRPGRTDP.

This sequence belongs to the DNA polymerase type-C family. DnaE2 subfamily.

It is found in the cytoplasm. The enzyme catalyses DNA(n) + a 2'-deoxyribonucleoside 5'-triphosphate = DNA(n+1) + diphosphate. DNA polymerase involved in damage-induced mutagenesis and translesion synthesis (TLS). It is not the major replicative DNA polymerase. The chain is Error-prone DNA polymerase from Nocardia farcinica (strain IFM 10152).